The chain runs to 186 residues: Type 1 phosphatases regulator ypi-1 (186 aa).

Residues 1 to 32 are compositionally biased toward polar residues; sequence MTSVAQRQAQPAQPSTSQTAAPTRTQTETSSP. The tract at residues 1 to 186 is disordered; it reads MTSVAQRQAQ…SETQGPGGSK (186 aa). The segment covering 82–94 has biased composition (low complexity); that stretch reads DSSSSSDSSSSSD. Basic and acidic residues predominate over residues 122–137; sequence HDHDHDGREGGCNHDH. The segment covering 138–151 has biased composition (basic residues); it reads GRGRKHGNKGKKTE.

The protein belongs to the YPI1 family.

The protein resides in the nucleus. Functionally, regulator of type 1 phosphatases which maintains protein phosphatase activity under strict control. The sequence is that of Type 1 phosphatases regulator ypi-1 (ypi-1) from Neurospora crassa (strain ATCC 24698 / 74-OR23-1A / CBS 708.71 / DSM 1257 / FGSC 987).